A 358-amino-acid chain; its full sequence is Phosphoribosylformylglycinamidine cyclo-ligase (358 aa).

It belongs to the AIR synthase family.

The protein localises to the cytoplasm. It carries out the reaction 2-formamido-N(1)-(5-O-phospho-beta-D-ribosyl)acetamidine + ATP = 5-amino-1-(5-phospho-beta-D-ribosyl)imidazole + ADP + phosphate + H(+). It functions in the pathway purine metabolism; IMP biosynthesis via de novo pathway; 5-amino-1-(5-phospho-D-ribosyl)imidazole from N(2)-formyl-N(1)-(5-phospho-D-ribosyl)glycinamide: step 2/2. The sequence is that of Phosphoribosylformylglycinamidine cyclo-ligase from Nitrosococcus oceani (strain ATCC 19707 / BCRC 17464 / JCM 30415 / NCIMB 11848 / C-107).